The chain runs to 290 residues: Eukaryotic translation initiation factor 3 subunit F-2 (290 aa).

The MPN domain occupies 12–150; it reads VRLQPLVLFQ…TRLYCAVTMG (139 aa).

Belongs to the eIF-3 subunit F family. As to quaternary structure, component of the eukaryotic translation initiation factor 3 (eIF-3) complex. The eIF-3 complex interacts with pix.

Its subcellular location is the cytoplasm. Its function is as follows. Component of the eukaryotic translation initiation factor 3 (eIF-3) complex, which is involved in protein synthesis of a specialized repertoire of mRNAs and, together with other initiation factors, stimulates binding of mRNA and methionyl-tRNAi to the 40S ribosome. The eIF-3 complex specifically targets and initiates translation of a subset of mRNAs involved in cell proliferation. This is Eukaryotic translation initiation factor 3 subunit F-2 from Drosophila mojavensis (Fruit fly).